The following is a 1029-amino-acid chain: Error-prone DNA polymerase (1029 aa).

Belongs to the DNA polymerase type-C family. DnaE2 subfamily.

It is found in the cytoplasm. It carries out the reaction DNA(n) + a 2'-deoxyribonucleoside 5'-triphosphate = DNA(n+1) + diphosphate. In terms of biological role, DNA polymerase involved in damage-induced mutagenesis and translesion synthesis (TLS). It is not the major replicative DNA polymerase. The protein is Error-prone DNA polymerase of Saccharophagus degradans (strain 2-40 / ATCC 43961 / DSM 17024).